Here is a 341-residue protein sequence, read N- to C-terminus: Tetraacyldisaccharide 4'-kinase (341 aa).

54 to 61 lines the ATP pocket; sequence TVGGAGKT.

This sequence belongs to the LpxK family.

The catalysed reaction is a lipid A disaccharide + ATP = a lipid IVA + ADP + H(+). It functions in the pathway glycolipid biosynthesis; lipid IV(A) biosynthesis; lipid IV(A) from (3R)-3-hydroxytetradecanoyl-[acyl-carrier-protein] and UDP-N-acetyl-alpha-D-glucosamine: step 6/6. In terms of biological role, transfers the gamma-phosphate of ATP to the 4'-position of a tetraacyldisaccharide 1-phosphate intermediate (termed DS-1-P) to form tetraacyldisaccharide 1,4'-bis-phosphate (lipid IVA). In Brucella anthropi (strain ATCC 49188 / DSM 6882 / CCUG 24695 / JCM 21032 / LMG 3331 / NBRC 15819 / NCTC 12168 / Alc 37) (Ochrobactrum anthropi), this protein is Tetraacyldisaccharide 4'-kinase.